The chain runs to 278 residues: Ribosomal RNA small subunit methyltransferase A (278 aa).

S-adenosyl-L-methionine contacts are provided by N18, L20, G45, E66, D89, and N110.

It belongs to the class I-like SAM-binding methyltransferase superfamily. rRNA adenine N(6)-methyltransferase family. RsmA subfamily.

The protein localises to the cytoplasm. The catalysed reaction is adenosine(1518)/adenosine(1519) in 16S rRNA + 4 S-adenosyl-L-methionine = N(6)-dimethyladenosine(1518)/N(6)-dimethyladenosine(1519) in 16S rRNA + 4 S-adenosyl-L-homocysteine + 4 H(+). Its function is as follows. Specifically dimethylates two adjacent adenosines (A1518 and A1519) in the loop of a conserved hairpin near the 3'-end of 16S rRNA in the 30S particle. May play a critical role in biogenesis of 30S subunits. The protein is Ribosomal RNA small subunit methyltransferase A of Cupriavidus pinatubonensis (strain JMP 134 / LMG 1197) (Cupriavidus necator (strain JMP 134)).